The primary structure comprises 322 residues: Mas-related G-protein coupled receptor member X4 (322 aa).

Topologically, residues 1 to 31 (MDPTVPVFGTKLTPINGREETPCYNQTLSFT) are extracellular. Residue N25 is glycosylated (N-linked (GlcNAc...) asparagine). A helical membrane pass occupies residues 32-52 (VLTCIISLVGLTGNAVVLWLL). Topologically, residues 53–60 (GYRMRRNA) are cytoplasmic. The helical transmembrane segment at 61–81 (VSIYILNLAAADFLFLSFQII) threads the bilayer. At 82 to 96 (RLPLRLINISHLIRK) the chain is on the extracellular side. N-linked (GlcNAc...) asparagine glycosylation occurs at N89. Residues 97 to 117 (ILVSVMTFPYFTGLSMLSAIS) form a helical membrane-spanning segment. The Cytoplasmic segment spans residues 118–137 (TERCLSVLWPIWYRCRRPTH). A helical transmembrane segment spans residues 138 to 158 (LSAVVCVLLWGLSLLFSMLEW). The Extracellular portion of the chain corresponds to 159 to 177 (RFCDFLFSGADSSWCETSD). The chain crosses the membrane as a helical span at residues 178–198 (FIPVAWLIFLCVVLCVSSLVL). At 199 to 218 (LVRILCGSRKMPLTRLYVTI) the chain is on the cytoplasmic side. Residues 219–239 (LLTVLVFLLCGLPFGILGALI) traverse the membrane as a helical segment. Residues 240 to 254 (YRMHLNLEVLYCHVY) lie on the Extracellular side of the membrane. The helical transmembrane segment at 255–275 (LVCMSLSSLNSSANPIIYFFV) threads the bilayer. Topologically, residues 276-322 (GSFRQRQNRQNLKLVLQRALQDKPEVDKGEGQLPEESLELSGSRLGP) are cytoplasmic. The disordered stretch occupies residues 299–322 (PEVDKGEGQLPEESLELSGSRLGP).

This sequence belongs to the G-protein coupled receptor 1 family. Mas subfamily. As to expression, uniquely localized in a subset of small dorsal root and trigeminal sensory neurons.

The protein localises to the cell membrane. In terms of biological role, orphan receptor. Probably involved in the function of nociceptive neurons. May regulate nociceptor function and/or development, including the sensation or modulation of pain. Potently activated by enkephalins. The chain is Mas-related G-protein coupled receptor member X4 (MRGPRX4) from Homo sapiens (Human).